The following is a 260-amino-acid chain: Thiazole synthase (260 aa).

Lys96 functions as the Schiff-base intermediate with DXP in the catalytic mechanism. 1-deoxy-D-xylulose 5-phosphate is bound by residues Gly157, 183-184 (AG), and 205-206 (AS).

Belongs to the ThiG family. In terms of assembly, homotetramer. Forms heterodimers with either ThiH or ThiS.

It is found in the cytoplasm. It catalyses the reaction [ThiS sulfur-carrier protein]-C-terminal-Gly-aminoethanethioate + 2-iminoacetate + 1-deoxy-D-xylulose 5-phosphate = [ThiS sulfur-carrier protein]-C-terminal Gly-Gly + 2-[(2R,5Z)-2-carboxy-4-methylthiazol-5(2H)-ylidene]ethyl phosphate + 2 H2O + H(+). It participates in cofactor biosynthesis; thiamine diphosphate biosynthesis. Functionally, catalyzes the rearrangement of 1-deoxy-D-xylulose 5-phosphate (DXP) to produce the thiazole phosphate moiety of thiamine. Sulfur is provided by the thiocarboxylate moiety of the carrier protein ThiS. In vitro, sulfur can be provided by H(2)S. The chain is Thiazole synthase from Corynebacterium glutamicum (strain R).